Reading from the N-terminus, the 36-residue chain is Light-harvesting protein B-1015 gamma chain (36 aa).

In terms of biological role, one of the components of the bacteriochlorophyll-protein complex in the chromatophore membrane. This chain is Light-harvesting protein B-1015 gamma chain, found in Blastochloris viridis (Rhodopseudomonas viridis).